The primary structure comprises 328 residues: Malate dehydrogenase 2 (328 aa).

12–18 provides a ligand contact to NAD(+); it reads GAAGQIA. Residues R93 and R99 each contribute to the substrate site. NAD(+) contacts are provided by residues N106, Q113, and 130–132; that span reads VGN. Residues N132 and R163 each contribute to the substrate site. H188 acts as the Proton acceptor in catalysis.

The protein belongs to the LDH/MDH superfamily. MDH type 2 family.

The enzyme catalyses (S)-malate + NAD(+) = oxaloacetate + NADH + H(+). Its function is as follows. Catalyzes the reversible oxidation of malate to oxaloacetate. The polypeptide is Malate dehydrogenase 2 (Burkholderia vietnamiensis (strain G4 / LMG 22486) (Burkholderia cepacia (strain R1808))).